The following is a 365-amino-acid chain: Ribosomal RNA large subunit methyltransferase M (365 aa).

Residues S194, 227-230, D246, D266, and D284 each bind S-adenosyl-L-methionine; that span reads CPGG. K313 (proton acceptor) is an active-site residue.

Belongs to the class I-like SAM-binding methyltransferase superfamily. RNA methyltransferase RlmE family. RlmM subfamily. As to quaternary structure, monomer.

It localises to the cytoplasm. The enzyme catalyses cytidine(2498) in 23S rRNA + S-adenosyl-L-methionine = 2'-O-methylcytidine(2498) in 23S rRNA + S-adenosyl-L-homocysteine + H(+). Functionally, catalyzes the 2'-O-methylation at nucleotide C2498 in 23S rRNA. This Pasteurella multocida (strain Pm70) protein is Ribosomal RNA large subunit methyltransferase M.